A 328-amino-acid chain; its full sequence is MLLPACLRRCARLLFWIPVLVVIVVVMWSYYAYVVHFCWILLSSATQRVVFLCLFHLCFGMFSWSFWKAVSTPPSSPSVEFQFSTSDSLLYELERDDVAKSPILLEISQKLPVHTRTATGAIRFCHHCQLIKPDRCHHCSVCQTCVLKMDHHCLWLNNCMGFSNYKFFMLFLLYSLLYCLLIVSTVTPTVIQLWRGRLFDSCVKLHVLFLTLVSAIFAITLCFLLIFHIWLLTSNKTTLEWLSVPFFANGPGSKAFDVGVQANFLQVFGKKKRLWLFPVFSSEGDGHSFPLSCQMSSHGPPVMNGHERCATLRTVASPKEAAVTIAVD.

The Cytoplasmic portion of the chain corresponds to 1 to 14; sequence MLLPACLRRCARLL. Residues 15–35 form a helical membrane-spanning segment; sequence FWIPVLVVIVVVMWSYYAYVV. Residues 36–48 lie on the Lumenal side of the membrane; it reads HFCWILLSSATQR. Residues 49–69 form a helical membrane-spanning segment; sequence VVFLCLFHLCFGMFSWSFWKA. Residues 70–166 are Cytoplasmic-facing; the sequence is VSTPPSSPSV…NNCMGFSNYK (97 aa). Positions 123-173 constitute a DHHC domain; sequence RFCHHCQLIKPDRCHHCSVCQTCVLKMDHHCLWLNNCMGFSNYKFFMLFLL. Residues Cys125 and Cys128 each coordinate Zn(2+). Lys132 lines the substrate pocket. Zn(2+) is bound by residues His138, Cys139, Cys142, Cys145, and His152. Cys153 functions as the S-palmitoyl cysteine intermediate in the catalytic mechanism. Zn(2+) is bound at residue Cys159. The helical transmembrane segment at 167–187 threads the bilayer; sequence FFMLFLLYSLLYCLLIVSTVT. At 188 to 206 the chain is on the lumenal side; that stretch reads PTVIQLWRGRLFDSCVKLH. Residues 207–227 form a helical membrane-spanning segment; the sequence is VLFLTLVSAIFAITLCFLLIF. Over 228–328 the chain is Cytoplasmic; it reads HIWLLTSNKT…KEAAVTIAVD (101 aa).

It belongs to the DHHC palmitoyltransferase family. Autopalmitoylated (in vitro).

It localises to the golgi apparatus membrane. The protein localises to the postsynaptic density. It carries out the reaction L-cysteinyl-[protein] + hexadecanoyl-CoA = S-hexadecanoyl-L-cysteinyl-[protein] + CoA. The enzyme catalyses L-cysteinyl-[protein] + tetradecanoyl-CoA = S-tetradecanoyl-L-cysteinyl-[protein] + CoA. The catalysed reaction is L-cysteinyl-[protein] + octadecanoyl-CoA = S-octadecanoyl-L-cysteinyl-[protein] + CoA. Its function is as follows. Palmitoyltransferase that catalyzes the addition of palmitate onto various protein substrates. Has no stringent fatty acid selectivity and in addition to palmitate can also transfer onto target proteins myristate from tetradecanoyl-CoA and stearate from octadecanoyl-CoA. May thereby regulate target proteins association and localization to membranes. The polypeptide is Palmitoyltransferase ZDHHC15A (zdhhc15a) (Danio rerio (Zebrafish)).